The chain runs to 320 residues: MATAVGGGSDVEVGFAKLQGEDFEYYMQSYSIILGRNSKKATVDVDLSSLGGGMNISRNHARIFYDFTRRRFSLEVLGKNGCLVEGVLHLPGNPNVKLDSQDLLQIGDKEFYFLLPVRSILGGPLGPRHHVSGQTSVVPYHNYQSGPGSGSGKKGVRSRELYEYDDEDDDDDDDEEDDMRGSGKKTRRDGHEVVYASGEKKREGRSKVDREADDQQFLQLEEKDVVSSVATVLSDLCGPGEWMPMEKLHSVILKEYGNVWHHSRVRRYLSQEDWAIPEAKGKPWYGLLMLLRKYPEHFVINTRSKGRVTLEFVSLVTLLS.

At A2 the chain carries N-acetylalanine. Positions 32-89 constitute an FHA domain; the sequence is IILGRNSKKATVDVDLSSLGGGMNISRNHARIFYDFTRRRFSLEVLGKNGCLVEGVLH. Residues 138-211 are disordered; it reads VPYHNYQSGP…REGRSKVDRE (74 aa). Residues 163 to 178 show a composition bias toward acidic residues; the sequence is EYDDEDDDDDDDEEDD. Residues 198–210 show a composition bias toward basic and acidic residues; it reads GEKKREGRSKVDR.

Widely expressed.

It is found in the nucleus. Its function is as follows. May play a role in the control of plant organ development and specifically in the regulation of stamen development. Does not show transactivation activity in yeast. This Arabidopsis thaliana (Mouse-ear cress) protein is FHA domain-containing protein FHA2.